A 341-amino-acid chain; its full sequence is Geranylgeranyl transferase type-2 subunit beta (341 aa).

PFTB repeat units lie at residues 15 to 55 (KSKH…ITMN), 62 to 104 (QQDV…KIYD), 122 to 163 (RERL…SLLN), 170 to 211 (ADTA…AIMN), 223 to 264 (VKLI…SILK), and 271 to 313 (LKIL…SLID). Residues 196-198 (HAA) and 243-255 (RPEK…YSWW) each bind geranylgeranyl diphosphate. Zn(2+) is bound by residues aspartate 249, cysteine 251, and histidine 301.

Belongs to the protein prenyltransferase subunit beta family. In terms of assembly, heterodimer of an alpha and a beta subunit. Zn(2+) serves as cofactor.

The catalysed reaction is geranylgeranyl diphosphate + L-cysteinyl-[protein] = S-geranylgeranyl-L-cysteinyl-[protein] + diphosphate. Its function is as follows. Catalyzes the transfer of a geranyl-geranyl moiety from geranyl-geranyl pyrophosphate to proteins having the C-terminal -XCC or -XCXC, where both cysteines may become modified. Acts on YPT1 and SEC4. The protein is Geranylgeranyl transferase type-2 subunit beta (BET2) of Candida albicans (Yeast).